The sequence spans 305 residues: UDP-3-O-acyl-N-acetylglucosamine deacetylase (305 aa).

Zn(2+)-binding residues include histidine 79, histidine 238, and aspartate 242. Histidine 265 acts as the Proton donor in catalysis.

It belongs to the LpxC family. Requires Zn(2+) as cofactor.

The catalysed reaction is a UDP-3-O-[(3R)-3-hydroxyacyl]-N-acetyl-alpha-D-glucosamine + H2O = a UDP-3-O-[(3R)-3-hydroxyacyl]-alpha-D-glucosamine + acetate. It participates in glycolipid biosynthesis; lipid IV(A) biosynthesis; lipid IV(A) from (3R)-3-hydroxytetradecanoyl-[acyl-carrier-protein] and UDP-N-acetyl-alpha-D-glucosamine: step 2/6. Functionally, catalyzes the hydrolysis of UDP-3-O-myristoyl-N-acetylglucosamine to form UDP-3-O-myristoylglucosamine and acetate, the committed step in lipid A biosynthesis. The sequence is that of UDP-3-O-acyl-N-acetylglucosamine deacetylase from Haemophilus influenzae (strain PittEE).